The following is a 439-amino-acid chain: Potassium/proton antiporter CemA (439 aa).

The next 6 helical transmembrane spans lie at 55–75, 79–99, 220–240, 317–337, 364–384, and 399–419; these read IMLY…WSLL, ISLF…NFFN, YMLF…IWFL, LLHL…FILG, ILLL…EIVI, and IISC…KYWI.

The protein belongs to the CemA family.

The protein resides in the plastid. Its subcellular location is the chloroplast inner membrane. The catalysed reaction is K(+)(in) + H(+)(out) = K(+)(out) + H(+)(in). Contributes to K(+)/H(+) antiport activity by supporting proton efflux to control proton extrusion and homeostasis in chloroplasts in a light-dependent manner to modulate photosynthesis. Prevents excessive induction of non-photochemical quenching (NPQ) under continuous-light conditions. Indirectly promotes efficient inorganic carbon uptake into chloroplasts. This chain is Potassium/proton antiporter CemA, found in Physcomitrium patens (Spreading-leaved earth moss).